Here is a 170-residue protein sequence, read N- to C-terminus: Lipoprotein signal peptidase (170 aa).

Helical transmembrane passes span 11 to 31 (LGWL…KLHF), 41 to 61 (IVVI…AAFS), 69 to 89 (WQRW…VVWL), and 95 to 115 (NETW…GNLY). Residues D125 and D144 contribute to the active site. A helical transmembrane segment spans residues 136–156 (YFPAFNFADSAITVGAVMLAL).

This sequence belongs to the peptidase A8 family.

The protein resides in the cell inner membrane. The enzyme catalyses Release of signal peptides from bacterial membrane prolipoproteins. Hydrolyzes -Xaa-Yaa-Zaa-|-(S,diacylglyceryl)Cys-, in which Xaa is hydrophobic (preferably Leu), and Yaa (Ala or Ser) and Zaa (Gly or Ala) have small, neutral side chains.. Its pathway is protein modification; lipoprotein biosynthesis (signal peptide cleavage). In terms of biological role, this protein specifically catalyzes the removal of signal peptides from prolipoproteins. The sequence is that of Lipoprotein signal peptidase from Pseudomonas fluorescens (strain ATCC BAA-477 / NRRL B-23932 / Pf-5).